The primary structure comprises 600 residues: Na(+)/dicarboxylate cotransporter 3 (600 aa).

The Cytoplasmic segment spans residues 1 to 16; it reads MAALAALAKKVWSARR. The chain crosses the membrane as a helical span at residues 17–37; the sequence is LLVLLLVPLALLPILFALPPK. The Extracellular segment spans residues 38–55; that stretch reads EGRCLYVILLMAVYWCTE. The chain crosses the membrane as a helical span at residues 56 to 76; it reads ALPLSVTALLPIILFPFMGIL. The Cytoplasmic portion of the chain corresponds to 77–82; sequence PSSKVC. Residues 83-103 form a helical membrane-spanning segment; the sequence is PQYFLDTNFLFLSGLIMASAI. The Extracellular segment spans residues 104–137; it reads EEWNLHRRIALKVLMLVGVQPARLILGMMVTTSF. The helical transmembrane segment at 138–158 threads the bilayer; it reads LSMWLSNTASTAMMLPIASAI. The Cytoplasmic segment spans residues 159 to 229; the sequence is LKSLFGQREA…KEEEHRRNIW (71 aa). Residues 230 to 250 form a helical membrane-spanning segment; sequence KGFLISIPYSASIGGTATLTG. The Extracellular segment spans residues 251–278; it reads TAPNLILLGQLKSFFPQCDVVNFGSWFI. A helical transmembrane segment spans residues 279 to 299; sequence FAFPLMLLFLLVGWLWISFLY. The Cytoplasmic segment spans residues 300-336; it reads GGMSWRSWRKKKSKIRADAEDQAKAVIQEEFQNLGPI. The helical transmembrane segment at 337–357 threads the bilayer; sequence KFAEQAVFILFCTFAILLFSR. Topologically, residues 358 to 372 are extracellular; the sequence is DPKFIPGWASLFAPG. A helical transmembrane segment spans residues 373-393; sequence FVSDAVTGVAIVTILFFFPSQ. Topologically, residues 394 to 422 are cytoplasmic; that stretch reads KPSLKWWFDFKAPNSETEPLLSWKKAQET. Residues 423–443 constitute an intramembrane region (helical); the sequence is VPWNIILLLGGGFAMAKGCEE. Residues 444–461 are Cytoplasmic-facing; sequence SGLSAWIGGQLHPLEHVP. A helical transmembrane segment spans residues 462–482; the sequence is PLLAVLLITVVIAFFTEFASN. The Extracellular segment spans residues 483 to 505; sequence TATIIIFLPVLAELAIRLHVHPL. Residues 506-526 form a helical membrane-spanning segment; it reads YLMIPGTVGCSYAFMLPVSTP. At 527–546 the chain is on the cytoplasmic side; it reads PNSIAFSTGHLLVKDMVRTG. A helical transmembrane segment spans residues 547 to 567; sequence LLMNLMGVLLLSLAMNTWAQT. Topologically, residues 568 to 600 are extracellular; that stretch reads IFQLGTFPDWANTHAANATALPPALTNNTVQTF. N-linked (GlcNAc...) asparagine glycosylation is found at Asn-584 and Asn-594.

The protein belongs to the SLC13A/DASS transporter (TC 2.A.47) family. NADC subfamily. As to expression, highly expressed in kidney, and at much lower levels in brain.

The protein resides in the cell membrane. It catalyses the reaction succinate(out) + 3 Na(+)(out) = succinate(in) + 3 Na(+)(in). It carries out the reaction 2-oxoglutarate(out) + 3 Na(+)(out) = 2-oxoglutarate(in) + 3 Na(+)(in). The catalysed reaction is N-acetyl-L-aspartate(out) + 3 Na(+)(out) = N-acetyl-L-aspartate(in) + 3 Na(+)(in). The enzyme catalyses fumarate(out) + 3 Na(+)(out) = fumarate(in) + 3 Na(+)(in). It catalyses the reaction glutarate(out) + 3 Na(+)(out) = glutarate(in) + 3 Na(+)(in). It carries out the reaction 2,2-dimethylsuccinate(out) + 3 Na(+)(out) = 2,2-dimethylsuccinate(in) + 3 Na(+)(in). The catalysed reaction is 2,3-dimethylsuccinate(out) + 3 Na(+)(out) = 2,3-dimethylsuccinate(in) + 3 Na(+)(in). The enzyme catalyses malate(out) + 3 Na(+)(out) = malate(in) + 3 Na(+)(in). It catalyses the reaction itaconate(out) + 3 Na(+)(out) = itaconate(in) + 3 Na(+)(in). In terms of biological role, high-affinity sodium-dicarboxylate cotransporter that accepts a range of substrates with 4-6 carbon atoms, such as the citric acid cycle intermediates succinate and alpha-ketoglutarate (2-oxoglutarate), as well as other compounds including N-acetyl-L-aspartate. Transports the dicarboxylate into the cell with a probable stoichiometry of 3 Na(+) for 1 divalent dicarboxylate, rendering the process electrogenic. Can transport citrate in a Na(+)-dependent manner, recognizing the divalent form of citrate rather than the trivalent form which is normally found in blood. Imports itaconate in hepatocytes leading to activation of TFEB-dependent lysosomal biogenesis involved in antibacterial innate immune response. The polypeptide is Na(+)/dicarboxylate cotransporter 3 (Slc13a3) (Mus musculus (Mouse)).